The following is a 130-amino-acid chain: Small ribosomal subunit protein uS11 (130 aa).

It belongs to the universal ribosomal protein uS11 family. Part of the 30S ribosomal subunit. Interacts with proteins S7 and S18. Binds to IF-3.

Functionally, located on the platform of the 30S subunit, it bridges several disparate RNA helices of the 16S rRNA. Forms part of the Shine-Dalgarno cleft in the 70S ribosome. The polypeptide is Small ribosomal subunit protein uS11 (Latilactobacillus sakei subsp. sakei (strain 23K) (Lactobacillus sakei subsp. sakei)).